Reading from the N-terminus, the 146-residue chain is Phosphoribosyl-AMP cyclohydrolase (146 aa).

A Mg(2+)-binding site is contributed by Asp-95. A Zn(2+)-binding site is contributed by Cys-96. Residues Asp-97 and Asp-99 each contribute to the Mg(2+) site. Zn(2+) contacts are provided by Cys-112 and Cys-119.

Belongs to the PRA-CH family. As to quaternary structure, homodimer. Mg(2+) is required as a cofactor. The cofactor is Zn(2+).

It localises to the cytoplasm. It carries out the reaction 1-(5-phospho-beta-D-ribosyl)-5'-AMP + H2O = 1-(5-phospho-beta-D-ribosyl)-5-[(5-phospho-beta-D-ribosylamino)methylideneamino]imidazole-4-carboxamide. Its pathway is amino-acid biosynthesis; L-histidine biosynthesis; L-histidine from 5-phospho-alpha-D-ribose 1-diphosphate: step 3/9. Its function is as follows. Catalyzes the hydrolysis of the adenine ring of phosphoribosyl-AMP. This is Phosphoribosyl-AMP cyclohydrolase from Chromohalobacter salexigens (strain ATCC BAA-138 / DSM 3043 / CIP 106854 / NCIMB 13768 / 1H11).